A 237-amino-acid polypeptide reads, in one-letter code: NAD(P)H-quinone oxidoreductase subunit K, chloroplastic (237 aa).

The [4Fe-4S] cluster site is built by cysteine 55, cysteine 56, cysteine 120, and cysteine 151.

Belongs to the complex I 20 kDa subunit family. In terms of assembly, NDH is composed of at least 16 different subunits, 5 of which are encoded in the nucleus. It depends on [4Fe-4S] cluster as a cofactor.

The protein localises to the plastid. The protein resides in the chloroplast thylakoid membrane. It carries out the reaction a plastoquinone + NADH + (n+1) H(+)(in) = a plastoquinol + NAD(+) + n H(+)(out). The catalysed reaction is a plastoquinone + NADPH + (n+1) H(+)(in) = a plastoquinol + NADP(+) + n H(+)(out). Its function is as follows. NDH shuttles electrons from NAD(P)H:plastoquinone, via FMN and iron-sulfur (Fe-S) centers, to quinones in the photosynthetic chain and possibly in a chloroplast respiratory chain. The immediate electron acceptor for the enzyme in this species is believed to be plastoquinone. Couples the redox reaction to proton translocation, and thus conserves the redox energy in a proton gradient. The polypeptide is NAD(P)H-quinone oxidoreductase subunit K, chloroplastic (Nephroselmis olivacea (Green alga)).